The sequence spans 638 residues: Chaperone protein DnaK (638 aa).

Phosphothreonine; by autocatalysis is present on threonine 198. Residues 603-618 (QQAQAQQAQGADADAQ) show a composition bias toward low complexity. The interval 603 to 638 (QQAQAQQAQGADADAQQSKEDDVVDAEFEEVKDDKK) is disordered. Residues 624–638 (DVVDAEFEEVKDDKK) are compositionally biased toward acidic residues.

The protein belongs to the heat shock protein 70 family.

In terms of biological role, acts as a chaperone. The polypeptide is Chaperone protein DnaK (Vibrio campbellii (strain ATCC BAA-1116)).